The sequence spans 145 residues: 3-hydroxyacyl-[acyl-carrier-protein] dehydratase FabZ (145 aa).

The active site involves His-47.

The protein belongs to the thioester dehydratase family. FabZ subfamily.

The protein localises to the cytoplasm. The catalysed reaction is a (3R)-hydroxyacyl-[ACP] = a (2E)-enoyl-[ACP] + H2O. Its function is as follows. Involved in unsaturated fatty acids biosynthesis. Catalyzes the dehydration of short chain beta-hydroxyacyl-ACPs and long chain saturated and unsaturated beta-hydroxyacyl-ACPs. The protein is 3-hydroxyacyl-[acyl-carrier-protein] dehydratase FabZ of Polaromonas naphthalenivorans (strain CJ2).